The chain runs to 207 residues: Small ribosomal subunit protein uS4 (207 aa).

Residues 96–156 (SRLDNTVYRM…KKSHKQSRIR (61 aa)) enclose the S4 RNA-binding domain.

This sequence belongs to the universal ribosomal protein uS4 family. Part of the 30S ribosomal subunit. Contacts protein S5. The interaction surface between S4 and S5 is involved in control of translational fidelity.

Functionally, one of the primary rRNA binding proteins, it binds directly to 16S rRNA where it nucleates assembly of the body of the 30S subunit. Its function is as follows. With S5 and S12 plays an important role in translational accuracy. The sequence is that of Small ribosomal subunit protein uS4 from Blochmanniella pennsylvanica (strain BPEN).